An 81-amino-acid polypeptide reads, in one-letter code: Photosystem I iron-sulfur center (81 aa).

4Fe-4S ferredoxin-type domains follow at residues 2-31 (SHTVKIYDTCIGCTQCVRACPTDVLEMVPW) and 39-68 (VASSPRTEDCVGCKRCETACPTDFLSIRVY). The [4Fe-4S] cluster site is built by Cys11, Cys14, Cys17, Cys21, Cys48, Cys51, Cys54, and Cys58.

As to quaternary structure, the cyanobacterial PSI reaction center is composed of one copy each of PsaA,B,C,D,E,F,I,J,K,L,M and X, and forms trimeric complexes. Requires [4Fe-4S] cluster as cofactor.

The protein resides in the cellular thylakoid membrane. The catalysed reaction is reduced [plastocyanin] + hnu + oxidized [2Fe-2S]-[ferredoxin] = oxidized [plastocyanin] + reduced [2Fe-2S]-[ferredoxin]. In terms of biological role, apoprotein for the two 4Fe-4S centers FA and FB of photosystem I (PSI); essential for photochemical activity. FB is the terminal electron acceptor of PSI, donating electrons to ferredoxin. The C-terminus interacts with PsaA/B/D and helps assemble the protein into the PSI complex. Required for binding of PsaD and PsaE to PSI. PSI is a plastocyanin/cytochrome c6-ferredoxin oxidoreductase, converting photonic excitation into a charge separation, which transfers an electron from the donor P700 chlorophyll pair to the spectroscopically characterized acceptors A0, A1, FX, FA and FB in turn. This Trichormus variabilis (strain ATCC 29413 / PCC 7937) (Anabaena variabilis) protein is Photosystem I iron-sulfur center.